We begin with the raw amino-acid sequence, 297 residues long: Indole-3-glycerol phosphate synthase (297 aa).

It belongs to the TrpC family.

It catalyses the reaction 1-(2-carboxyphenylamino)-1-deoxy-D-ribulose 5-phosphate + H(+) = (1S,2R)-1-C-(indol-3-yl)glycerol 3-phosphate + CO2 + H2O. The protein operates within amino-acid biosynthesis; L-tryptophan biosynthesis; L-tryptophan from chorismate: step 4/5. This is Indole-3-glycerol phosphate synthase from Trichodesmium erythraeum (strain IMS101).